The chain runs to 1070 residues: Error-prone DNA polymerase (1070 aa).

Belongs to the DNA polymerase type-C family. DnaE2 subfamily.

The protein resides in the cytoplasm. It carries out the reaction DNA(n) + a 2'-deoxyribonucleoside 5'-triphosphate = DNA(n+1) + diphosphate. Its function is as follows. DNA polymerase involved in damage-induced mutagenesis and translesion synthesis (TLS). It is not the major replicative DNA polymerase. The sequence is that of Error-prone DNA polymerase from Aromatoleum aromaticum (strain DSM 19018 / LMG 30748 / EbN1) (Azoarcus sp. (strain EbN1)).